A 206-amino-acid chain; its full sequence is Thymidylate kinase (206 aa).

Gly-11–Thr-18 provides a ligand contact to ATP.

Belongs to the thymidylate kinase family.

It catalyses the reaction dTMP + ATP = dTDP + ADP. Phosphorylation of dTMP to form dTDP in both de novo and salvage pathways of dTTP synthesis. This is Thymidylate kinase from Burkholderia thailandensis (strain ATCC 700388 / DSM 13276 / CCUG 48851 / CIP 106301 / E264).